The primary structure comprises 330 residues: Aspartate--ammonia ligase (330 aa).

This sequence belongs to the class-II aminoacyl-tRNA synthetase family. AsnA subfamily.

Its subcellular location is the cytoplasm. The catalysed reaction is L-aspartate + NH4(+) + ATP = L-asparagine + AMP + diphosphate + H(+). It participates in amino-acid biosynthesis; L-asparagine biosynthesis; L-asparagine from L-aspartate (ammonia route): step 1/1. The polypeptide is Aspartate--ammonia ligase (Cronobacter sakazakii (strain ATCC BAA-894) (Enterobacter sakazakii)).